Reading from the N-terminus, the 103-residue chain is Auxin-responsive protein SAUR50 (103 aa).

It belongs to the ARG7 family.

Its function is as follows. Effector of hormonal and environmental signals in plant growth. Involved in heliotropism. The sequence is that of Auxin-responsive protein SAUR50 from Helianthus annuus (Common sunflower).